The following is a 316-amino-acid chain: Methionyl-tRNA formyltransferase (316 aa).

S113–P116 serves as a coordination point for (6S)-5,6,7,8-tetrahydrofolate.

This sequence belongs to the Fmt family.

It catalyses the reaction L-methionyl-tRNA(fMet) + (6R)-10-formyltetrahydrofolate = N-formyl-L-methionyl-tRNA(fMet) + (6S)-5,6,7,8-tetrahydrofolate + H(+). Functionally, attaches a formyl group to the free amino group of methionyl-tRNA(fMet). The formyl group appears to play a dual role in the initiator identity of N-formylmethionyl-tRNA by promoting its recognition by IF2 and preventing the misappropriation of this tRNA by the elongation apparatus. In Sodalis glossinidius (strain morsitans), this protein is Methionyl-tRNA formyltransferase.